The sequence spans 146 residues: Leghemoglobin 1 (146 aa).

In terms of domain architecture, Globin spans 2–146 (GFTAQQDALV…LAAAIKKAMS (145 aa)). Phosphoserine; by CCAMK is present on residues S13 and S14. A Nitrated tyrosine modification is found at Y30. A phosphoserine; by CCAMK mark is found at S45 and S55. Residue S45 coordinates heme b. An O2-binding site is contributed by H61. Heme b is bound by residues K64, H93, and K96. Residue S123 is modified to Phosphoserine; by CCAMK. Y134 is subject to Nitrated tyrosine.

It belongs to the plant globin family. As to quaternary structure, monomer. In terms of processing, nitrated in effective nodules and particularly in hypoxic conditions; this mechanism may play a protective role in the symbiosis by buffering toxic peroxynitrite NO(2)(-). Nitration level decrease during nodule senescence. Post-translationally, phosphorylated by CCAMK at serine residues in a Ca(2+)-dependent manner; the phosphorylation at Ser-45 disrupts the molecular environment of its porphyrin ring oxygen binding pocket, thus leading to a reduced oxygen consumption and to the delivery of oxygen O(2) to symbiosomes. In terms of tissue distribution, specifically and strongly expressed in root nodules and at low levels in seedlings.

The protein localises to the cytoplasm. It is found in the cytosol. It localises to the nucleus. Its function is as follows. Leghemoglobin that reversibly binds oxygen O(2) through a pentacoordinated heme iron. In root nodules, facilitates the diffusion of oxygen to the bacteroids while preventing the bacterial nitrogenase from being inactivated by buffering dioxygen, nitric oxide and carbon monoxide, and promoting the formation of reactive oxygen species (ROS, e.g. H(2)O(2)). This role is essential for symbiotic nitrogen fixation (SNF). The chain is Leghemoglobin 1 from Lotus japonicus (Lotus corniculatus var. japonicus).